Here is a 147-residue protein sequence, read N- to C-terminus: Large ribosomal subunit protein bL9 (147 aa).

Belongs to the bacterial ribosomal protein bL9 family.

In terms of biological role, binds to the 23S rRNA. In Shouchella clausii (strain KSM-K16) (Alkalihalobacillus clausii), this protein is Large ribosomal subunit protein bL9.